The sequence spans 130 residues: Protein ApaG (130 aa).

One can recognise an ApaG domain in the interval 3–127; that stretch reads RAVTRGIEVS…FSLDIPEQRR (125 aa).

This Brucella anthropi (strain ATCC 49188 / DSM 6882 / CCUG 24695 / JCM 21032 / LMG 3331 / NBRC 15819 / NCTC 12168 / Alc 37) (Ochrobactrum anthropi) protein is Protein ApaG.